The chain runs to 547 residues: Chaperonin GroEL (547 aa).

ATP-binding positions include T30–P33, K51, D87–T91, G415, and D495.

Belongs to the chaperonin (HSP60) family. In terms of assembly, forms a cylinder of 14 subunits composed of two heptameric rings stacked back-to-back. Interacts with the co-chaperonin GroES.

The protein resides in the cytoplasm. It carries out the reaction ATP + H2O + a folded polypeptide = ADP + phosphate + an unfolded polypeptide.. Its function is as follows. Together with its co-chaperonin GroES, plays an essential role in assisting protein folding. The GroEL-GroES system forms a nano-cage that allows encapsulation of the non-native substrate proteins and provides a physical environment optimized to promote and accelerate protein folding. In Thiobacillus denitrificans (strain ATCC 25259 / T1), this protein is Chaperonin GroEL.